We begin with the raw amino-acid sequence, 714 residues long: MNTDGLSREKVSDSQITSEQILQDAFQLKDEPLNRPKQSIQDLDELRSFQLTKRKEYEQQLNKNRLNFGQWLRYAKWEVKHNHDFPRARSIFERALEVNVQHIPFWTHYIQFELSHKNITHARNLLDRAVTTLPRVDKLWFLYVQTEETLKNYQMVRIIFERWLSWNPNPSAWDAYINYEKRYDEYDNAREIYIRYVQIHSSGEIWLKWIDFEMNDVPIDPEQVKRIRNVFELSVDSMLASEALRGDISLAEIINKWSLWEISVKEYERARAIFQLMLKSDTIQEIITPEQRNQIYSSYTEFEKSYGDKDTIESSIMIKRKLKYEEEVNKSPSDYDSWWSYISILQQEDNNEVTRETFERAIKVIPTDAFKSTVWRRYIYIWVKYAFWEEFTMGSIENGRNIWNKALKVIPHKRFTFAKIWISFAQFEIRNDPENGLASARKILGRSIGQSSTVKPKRKLFKFYIELEQKLGEWDRVRKLYEKWLELSLVGENNLSTINSLLTYIDFEKNIQEHQRCISLFELGVRLAEDDKIFTKVNPLEYMLMQFINYYKEEMRYAEARSLYRKLVERVSTPKVWISFALFESSIPTDSQLKAFEESTEEEFEFSIDETHRETTRSVFREANDFFKHNNLKEDRAVVIEAWKQYEEANGSEESLRDITKKLPVIVKRRRLIEGEEEEYLDYIFPEDEEAKPSKISGLNAFLANAQKWMANQN.

HAT repeat units follow at residues 48 to 80 (SFQL…WEVK), 83 to 115 (HDFP…FELS), 117 to 149 (KNIT…TEET), 151 to 182 (KNYQ…YEKR), 184 to 215 (DEYD…FEMN), 265 to 305 (KEYE…FEKS), 315 to 347 (SIMI…ILQQ), 349 to 384 (DNNE…IWVK), 394 to 430 (GSIE…FEIR), 435 to 470 (NGLA…LEQK), 472 to 510 (GEWD…FEKN), and 555 to 586 (MRYA…FESS).

The protein belongs to the crooked-neck family. As to quaternary structure, associated with the spliceosome.

The protein resides in the nucleus. Functionally, involved in pre-mRNA splicing and cell cycle progression. Required for the spliceosome assembly and initiation of the DNA replication. This is Pre-mRNA-splicing factor CLF1 (CLF1) from Debaryomyces hansenii (strain ATCC 36239 / CBS 767 / BCRC 21394 / JCM 1990 / NBRC 0083 / IGC 2968) (Yeast).